Consider the following 388-residue polypeptide: Arrestin-C (388 aa).

This sequence belongs to the arrestin family. As to quaternary structure, homodimer; disulfide-linked in response to retinal illumination. Interacts with CXCR4; the interaction is dependent on the C-terminal phosphorylation of CXCR4 and modulates the calcium ion mobilization activity of CXCR4. Interacts with GPR84. Inner and outer segments, and the inner plexiform regions of the retina.

The protein localises to the photoreceptor inner segment. The protein resides in the cell projection. Its subcellular location is the cilium. It is found in the photoreceptor outer segment. Its function is as follows. May play a role in an as yet undefined retina-specific signal transduction. Could bind to photoactivated-phosphorylated red/green opsins. This chain is Arrestin-C (ARR3), found in Homo sapiens (Human).